We begin with the raw amino-acid sequence, 195 residues long: Putative lysine exporter (195 aa).

The next 6 helical transmembrane spans lie at 4–24 (LLSA…WLHF), 30–50 (LYVL…NGIS), 61–81 (LMMG…SAFF), 86–106 (ITQG…SVVL), 117–137 (IAFF…PLFM), and 170–190 (PIAI…LVFF).

It belongs to the LysO family.

It localises to the cell inner membrane. Functionally, mediates export of lysine. The polypeptide is Putative lysine exporter (Haemophilus influenzae (strain ATCC 51907 / DSM 11121 / KW20 / Rd)).